We begin with the raw amino-acid sequence, 388 residues long: Succinate--CoA ligase [ADP-forming] subunit beta (388 aa).

One can recognise an ATP-grasp domain in the interval 9–244 (KEIFRSMGVA…LEEEDPKEIE (236 aa)). ATP contacts are provided by residues Lys46, 53-55 (GRG), Glu99, Cys102, and Glu107. Asn199 and Asp213 together coordinate Mg(2+). Substrate-binding positions include Asn264 and 321 to 323 (GIM).

Belongs to the succinate/malate CoA ligase beta subunit family. In terms of assembly, heterotetramer of two alpha and two beta subunits. Requires Mg(2+) as cofactor.

The catalysed reaction is succinate + ATP + CoA = succinyl-CoA + ADP + phosphate. The enzyme catalyses GTP + succinate + CoA = succinyl-CoA + GDP + phosphate. The protein operates within carbohydrate metabolism; tricarboxylic acid cycle; succinate from succinyl-CoA (ligase route): step 1/1. In terms of biological role, succinyl-CoA synthetase functions in the citric acid cycle (TCA), coupling the hydrolysis of succinyl-CoA to the synthesis of either ATP or GTP and thus represents the only step of substrate-level phosphorylation in the TCA. The beta subunit provides nucleotide specificity of the enzyme and binds the substrate succinate, while the binding sites for coenzyme A and phosphate are found in the alpha subunit. The chain is Succinate--CoA ligase [ADP-forming] subunit beta from Staphylococcus aureus (strain MRSA252).